The sequence spans 213 residues: Ribosomal RNA small subunit methyltransferase G (213 aa).

Residues Gly77, Phe82, 130–131, and Arg146 each bind S-adenosyl-L-methionine; that span reads IE.

It belongs to the methyltransferase superfamily. RNA methyltransferase RsmG family.

The protein resides in the cytoplasm. It carries out the reaction guanosine(527) in 16S rRNA + S-adenosyl-L-methionine = N(7)-methylguanosine(527) in 16S rRNA + S-adenosyl-L-homocysteine. In terms of biological role, specifically methylates the N7 position of guanine in position 527 of 16S rRNA. In Bartonella tribocorum (strain CIP 105476 / IBS 506), this protein is Ribosomal RNA small subunit methyltransferase G.